Consider the following 874-residue polypeptide: Alanine--tRNA ligase (874 aa).

The Zn(2+) site is built by His-562, His-566, Cys-664, and His-668.

This sequence belongs to the class-II aminoacyl-tRNA synthetase family. Requires Zn(2+) as cofactor.

Its subcellular location is the cytoplasm. The catalysed reaction is tRNA(Ala) + L-alanine + ATP = L-alanyl-tRNA(Ala) + AMP + diphosphate. Functionally, catalyzes the attachment of alanine to tRNA(Ala) in a two-step reaction: alanine is first activated by ATP to form Ala-AMP and then transferred to the acceptor end of tRNA(Ala). Also edits incorrectly charged Ser-tRNA(Ala) and Gly-tRNA(Ala) via its editing domain. This is Alanine--tRNA ligase from Neisseria meningitidis serogroup C / serotype 2a (strain ATCC 700532 / DSM 15464 / FAM18).